We begin with the raw amino-acid sequence, 340 residues long: Zinc finger protein 367 (340 aa).

The segment at Leu96–Ala140 is disordered. The span at Gly101–Gly114 shows a compositional bias: low complexity. Over residues Gly127–Ala140 the composition is skewed to basic and acidic residues. 2 C2H2-type zinc fingers span residues Ile157–His179 and Tyr185–His209. The interval Lys280–Gln317 is disordered. A coiled-coil region spans residues Gln299–Asn332. Ser300 is modified (phosphoserine). Residues Lys307–Gln317 are compositionally biased toward basic and acidic residues.

This sequence belongs to the krueppel C2H2-type zinc-finger protein family.

The protein localises to the nucleus. Functionally, transcriptional activator. May be involved in transcriptional activation of erythroid genes. In Rattus norvegicus (Rat), this protein is Zinc finger protein 367 (Znf367).